The chain runs to 775 residues: Thiamine repressible genes regulatory protein thi1 (775 aa).

The zn(2)-C6 fungal-type DNA-binding region spans 39-65; it reads CKHCRQKKIKCNGGQPCISCKTLNIEC. Ser-208 carries the phosphoserine modification. Disordered regions lie at residues 676–695 and 754–775; these read LTGESSNGSNSTPNEAFQPF and NVSEQSSHTAEQTSNLTLEKNG.

The protein localises to the nucleus. Transcription factor that activates the nmt1 promoter. Regulation of thiamine repressible genes. Positively regulates conjugation during meiosis. The chain is Thiamine repressible genes regulatory protein thi1 (thi1) from Schizosaccharomyces pombe (strain 972 / ATCC 24843) (Fission yeast).